A 220-amino-acid chain; its full sequence is Protein Syd (220 aa).

It belongs to the Syd family.

Its subcellular location is the cell inner membrane. Interacts with the SecY protein in vivo. May bind preferentially to an uncomplexed state of SecY, thus functioning either as a chelating agent for excess SecY in the cell or as a regulatory factor that negatively controls the translocase function. The sequence is that of Protein Syd from Shewanella loihica (strain ATCC BAA-1088 / PV-4).